The chain runs to 429 residues: Adenylosuccinate synthetase (429 aa).

GTP-binding positions include 12-18 (GDEGKGK) and 40-42 (GHT). D13 acts as the Proton acceptor in catalysis. Residues D13 and G40 each coordinate Mg(2+). IMP is bound by residues 13 to 16 (DEGK), 38 to 41 (NAGH), T128, R142, Q223, T238, and R302. The Proton donor role is filled by H41. Residue 298 to 304 (VNTGRKR) coordinates substrate. Residues R304, 330–332 (KLD), and 412–414 (GVG) contribute to the GTP site.

Belongs to the adenylosuccinate synthetase family. As to quaternary structure, homodimer. The cofactor is Mg(2+).

Its subcellular location is the cytoplasm. The catalysed reaction is IMP + L-aspartate + GTP = N(6)-(1,2-dicarboxyethyl)-AMP + GDP + phosphate + 2 H(+). It functions in the pathway purine metabolism; AMP biosynthesis via de novo pathway; AMP from IMP: step 1/2. Plays an important role in the de novo pathway of purine nucleotide biosynthesis. Catalyzes the first committed step in the biosynthesis of AMP from IMP. This Corynebacterium glutamicum (strain R) protein is Adenylosuccinate synthetase.